A 476-amino-acid chain; its full sequence is Adenosylhomocysteinase (476 aa).

3 residues coordinate substrate: T67, D142, and E202. Position 203-205 (T203–T205) interacts with NAD(+). K232 and D236 together coordinate substrate. Residues N237, G266–G271, E289, N324, I345–H347, and N390 contribute to the NAD(+) site.

The protein belongs to the adenosylhomocysteinase family. NAD(+) is required as a cofactor.

It localises to the cytoplasm. The enzyme catalyses S-adenosyl-L-homocysteine + H2O = L-homocysteine + adenosine. It participates in amino-acid biosynthesis; L-homocysteine biosynthesis; L-homocysteine from S-adenosyl-L-homocysteine: step 1/1. In terms of biological role, may play a key role in the regulation of the intracellular concentration of adenosylhomocysteine. The protein is Adenosylhomocysteinase of Parasynechococcus marenigrum (strain WH8102).